Reading from the N-terminus, the 106-residue chain is ATP-dependent Clp protease adapter protein ClpS (106 aa).

This sequence belongs to the ClpS family. As to quaternary structure, binds to the N-terminal domain of the chaperone ClpA.

Functionally, involved in the modulation of the specificity of the ClpAP-mediated ATP-dependent protein degradation. In Salmonella arizonae (strain ATCC BAA-731 / CDC346-86 / RSK2980), this protein is ATP-dependent Clp protease adapter protein ClpS.